A 437-amino-acid chain; its full sequence is MTANNLREQISQLVAQYANEALSPKPFVAGTSVVPPSGKVIGAKELQLMVEASLDGWLTTGRFNDAFEKKLGEFIGVPHVLTTTSGSSANLLALTALTSPKLGERALKPGDEVITVAAGFPTTVNPAIQNGLIPVFVDVDIPTYNIDASLIEAAVTEKSKAIMIAHTLGNAFNLSEVRRIADKYNLWLIEDCCDALGTTYEGQMVGTFGDIGTVSFYPAHHITMGEGGAVFTKSGELKKIIESFRDWGRDCYCAPGCDNTCGKRFGQQLGSLPQGYDHKYTYSHLGYNLKITDMQAACGLAQLERVEEFVEQRKANFSYLKQGLQSCTEFLELPEATEKSDPSWFGFPITLKETSGVNRVELVKFLDEAKIGTRLLFAGNLIRQPYFANVKYRVVGELTNTDRIMNQTFWIGIYPGLTTEHLDYVVSKFEEFFGLNF.

The protein belongs to the DegT/DnrJ/EryC1 family. It depends on pyridoxal 5'-phosphate as a cofactor.

It participates in bacterial outer membrane biogenesis; LPS O-antigen biosynthesis. This chain is Lipopolysaccharide biosynthesis protein RfbH (rfbH), found in Salmonella typhimurium (strain LT2 / SGSC1412 / ATCC 700720).